The chain runs to 20 residues: Non-secretory ribonuclease (20 aa).

The active-site Proton acceptor is H16.

Belongs to the pancreatic ribonuclease family. Interacts with and forms a tight 1:1 complex with RNH1. Dimerization of two such complexes may occur.

It is found in the lysosome. Its subcellular location is the cytoplasmic granule. The enzyme catalyses an [RNA] containing cytidine + H2O = an [RNA]-3'-cytidine-3'-phosphate + a 5'-hydroxy-ribonucleotide-3'-[RNA].. It carries out the reaction an [RNA] containing uridine + H2O = an [RNA]-3'-uridine-3'-phosphate + a 5'-hydroxy-ribonucleotide-3'-[RNA].. This is a non-secretory ribonuclease. It is a pyrimidine specific nuclease with a slight preference for U. Cytotoxin and helminthotoxin. Possesses a wide variety of biological activities. The sequence is that of Non-secretory ribonuclease (RNASE2) from Sus scrofa (Pig).